Here is a 290-residue protein sequence, read N- to C-terminus: tRNA (adenine(58)-N(1))-methyltransferase catalytic subunit TRMT61A (290 aa).

An N-acetylserine modification is found at Ser-2. Substrate regions lie at residues 20 to 22 (LGH), 35 to 42 (QTQTRHGV), 64 to 65 (GW), 85 to 89 (QILYS), and 110 to 117 (SGTGSGSV). Residues Leu-87, 114–116 (SGS), Glu-135, Arg-140, 163–164 (DV), and Asp-181 contribute to the S-adenosyl-L-methionine site. Substrate regions lie at residues 180–183 (LDIP) and 205–212 (SFSPCIEQ). Thr-279 provides a ligand contact to substrate.

The protein belongs to the class I-like SAM-binding methyltransferase superfamily. TRM61 family. In terms of assembly, heterotetramer; composed of two copies of TRMT6 and two copies of TRMT61A.

It is found in the nucleus. The catalysed reaction is adenosine(58) in tRNA + S-adenosyl-L-methionine = N(1)-methyladenosine(58) in tRNA + S-adenosyl-L-homocysteine + H(+). It catalyses the reaction an adenosine in mRNA + S-adenosyl-L-methionine = an N(1)-methyladenosine in mRNA + S-adenosyl-L-homocysteine + H(+). In terms of biological role, catalytic subunit of tRNA (adenine-N(1)-)-methyltransferase, which catalyzes the formation of N(1)-methyladenine at position 58 (m1A58) in initiator methionyl-tRNA. Catalytic subunit of mRNA N(1)-methyltransferase complex, which mediates methylation of adenosine residues at the N(1) position of a small subset of mRNAs: N(1) methylation takes place in tRNA T-loop-like structures of mRNAs and is only present at low stoichiometries. This is tRNA (adenine(58)-N(1))-methyltransferase catalytic subunit TRMT61A (Trmt61a) from Rattus norvegicus (Rat).